The primary structure comprises 92 residues: Large ribosomal subunit protein eL34 (92 aa).

It belongs to the eukaryotic ribosomal protein eL34 family.

The sequence is that of Large ribosomal subunit protein eL34 from Staphylothermus marinus (strain ATCC 43588 / DSM 3639 / JCM 9404 / F1).